A 453-amino-acid polypeptide reads, in one-letter code: Serine protease HTRA3 (453 aa).

Residues 1-17 (MQARALLLAALAALALA) form the signal peptide. The region spanning 21–84 (PAAPCPARCD…ECVRGLCRCR (64 aa)) is the IGFBP N-terminal domain. 8 cysteine pairs are disulfide-bonded: cysteine 25/cysteine 48, cysteine 29/cysteine 50, cysteine 34/cysteine 51, cysteine 39/cysteine 54, cysteine 62/cysteine 76, cysteine 70/cysteine 81, cysteine 83/cysteine 101, and cysteine 90/cysteine 126. The region spanning 64-128 (GPLDSPCGES…RQLQKGACPL (65 aa)) is the Kazal-like domain. Residues 175 to 340 (GSGFIMSEAG…AIPSDRITRF (166 aa)) are serine protease. Residues histidine 191, aspartate 227, and serine 305 each act as charge relay system in the active site. The PDZ domain occupies 359–444 (IRMRTITPSL…EVRRGNDDLL (86 aa)).

This sequence belongs to the peptidase S1C family. Homotrimer. Interacts with TGFB1; the interaction inhibits TGFB-mediated signaling. Interacts with BMP4; the interaction inhibits BMP4-mediated signaling. Interacts with TGFB2 and GDF5. Interacts with MYH9. As to expression, widely expressed, with highest levels in both adult and fetal heart, ovary, uterus placenta, and bladder. In the endometrium, expressed in epithelial glands and the stroma. Also present in leukocytes. Isoform 1 is predominant in heart and skeletal muscle, whereas isoform 2 is predominant in placenta and kidney.

It is found in the secreted. In terms of biological role, serine protease that cleaves beta-casein/CSN2 as well as several extracellular matrix (ECM) proteoglycans such as decorin/DCN, biglycan/BGN and fibronectin/FN1. Inhibits signaling mediated by TGF-beta family proteins possibly indirectly by degradation of these ECM proteoglycans. May act as a tumor suppressor. Negatively regulates, in vitro, trophoblast invasion during placental development and may be involved in the development of the placenta in vivo. May also have a role in ovarian development, granulosa cell differentiation and luteinization. This is Serine protease HTRA3 (HTRA3) from Homo sapiens (Human).